Reading from the N-terminus, the 351-residue chain is Protein EXPRESSION OF TERPENOIDS 1 (351 aa).

Residues 1-23 (MANFFSLGGNQEQQHQEISSSQA) are disordered. The segment covering 11–22 (QEQQHQEISSSQ) has biased composition (low complexity). Zn(2+)-binding residues include Cys-129, Cys-132, Cys-140, Cys-145, Cys-149, and Cys-156. The segment at residues 129–156 (CQDCGNQAKKDCQHMRCRTCCKSRGFQC) is a DNA-binding region (zn(2)-C6 fungal-type; degenerate). The interval 170–219 (RRERQQQLAALQQQQQGHNNNNNNHKNKRQREDPSASSLVSTRLPSNTNG) is disordered. A compositionally biased stretch (low complexity) spans 175–193 (QQLAALQQQQQGHNNNNNN). Positions 204-219 (SASSLVSTRLPSNTNG) are enriched in polar residues. The Required for homo- and heterodimerization motif lies at 258-261 (IGGH). The disordered stretch occupies residues 286 to 320 (TSSGGSAGGVQHHHHNSAAVATATTTSGGDATAAG). The segment covering 303-320 (AAVATATTTSGGDATAAG) has biased composition (low complexity).

Belongs to the SHI protein family. Forms homodimers and heterodimers with LRP1.

Its subcellular location is the nucleus. In terms of biological role, transcription activator involved in the transcriptional regulation of terpene biosynthesis in glandular trichomes. Binds to the promoter of the linalool synthase TPS5 and promotes TPS5 gene transactivation. Acts synergistically with MYC1 in the transactivation of TPS5. The chain is Protein EXPRESSION OF TERPENOIDS 1 from Solanum lycopersicum (Tomato).